Reading from the N-terminus, the 343-residue chain is Dihydroorotate dehydrogenase (quinone) (343 aa).

FMN is bound by residues 61–65 (AGLDK) and threonine 85. Lysine 65 lines the substrate pocket. Residue 110 to 114 (NRMGF) participates in substrate binding. Positions 138 and 171 each coordinate FMN. Asparagine 171 is a substrate binding site. The active-site Nucleophile is the serine 174. A substrate-binding site is contributed by asparagine 176. FMN-binding residues include lysine 216 and threonine 244. 245-246 (NT) contacts substrate. FMN is bound by residues glycine 267, glycine 296, and 317 to 318 (YS).

The protein belongs to the dihydroorotate dehydrogenase family. Type 2 subfamily. In terms of assembly, monomer. The cofactor is FMN.

It is found in the cell membrane. The catalysed reaction is (S)-dihydroorotate + a quinone = orotate + a quinol. Its pathway is pyrimidine metabolism; UMP biosynthesis via de novo pathway; orotate from (S)-dihydroorotate (quinone route): step 1/1. In terms of biological role, catalyzes the conversion of dihydroorotate to orotate with quinone as electron acceptor. The chain is Dihydroorotate dehydrogenase (quinone) from Pseudomonas savastanoi pv. phaseolicola (strain 1448A / Race 6) (Pseudomonas syringae pv. phaseolicola (strain 1448A / Race 6)).